Reading from the N-terminus, the 199-residue chain is NAD(P)H dehydrogenase (quinone) (199 aa).

The Flavodoxin-like domain maps to 4-190 (VLVLYYSAYG…AGARYQGKTI (187 aa)). FMN is bound by residues 10 to 15 (SAYGHI) and 78 to 80 (TRF). Residue Y12 coordinates NAD(+). W98 is a binding site for substrate. Residues 113–119 (STATQHG) and H134 each bind FMN.

Belongs to the WrbA family. It depends on FMN as a cofactor.

The catalysed reaction is a quinone + NADH + H(+) = a quinol + NAD(+). It carries out the reaction a quinone + NADPH + H(+) = a quinol + NADP(+). This chain is NAD(P)H dehydrogenase (quinone), found in Rhodopseudomonas palustris (strain BisB5).